The sequence spans 217 residues: tRNA (guanine-N(7)-)-methyltransferase (217 aa).

4 residues coordinate S-adenosyl-L-methionine: Glu44, Glu69, Asp96, and Asp118. Asp118 is an active-site residue. Substrate is bound by residues Lys122, Asp154, and 191–194 (TEYE).

The protein belongs to the class I-like SAM-binding methyltransferase superfamily. TrmB family.

The enzyme catalyses guanosine(46) in tRNA + S-adenosyl-L-methionine = N(7)-methylguanosine(46) in tRNA + S-adenosyl-L-homocysteine. The protein operates within tRNA modification; N(7)-methylguanine-tRNA biosynthesis. In terms of biological role, catalyzes the formation of N(7)-methylguanine at position 46 (m7G46) in tRNA. The sequence is that of tRNA (guanine-N(7)-)-methyltransferase from Bacillus cereus (strain G9842).